The sequence spans 174 residues: NADH-quinone oxidoreductase subunit B 2 (174 aa).

C51, C52, C116, and C145 together coordinate [4Fe-4S] cluster.

Belongs to the complex I 20 kDa subunit family. In terms of assembly, NDH-1 is composed of 14 different subunits. Subunits NuoB, C, D, E, F, and G constitute the peripheral sector of the complex. [4Fe-4S] cluster serves as cofactor.

Its subcellular location is the cell inner membrane. It carries out the reaction a quinone + NADH + 5 H(+)(in) = a quinol + NAD(+) + 4 H(+)(out). Functionally, NDH-1 shuttles electrons from NADH, via FMN and iron-sulfur (Fe-S) centers, to quinones in the respiratory chain. The immediate electron acceptor for the enzyme in this species is believed to be ubiquinone. Couples the redox reaction to proton translocation (for every two electrons transferred, four hydrogen ions are translocated across the cytoplasmic membrane), and thus conserves the redox energy in a proton gradient. In Thermodesulfovibrio yellowstonii (strain ATCC 51303 / DSM 11347 / YP87), this protein is NADH-quinone oxidoreductase subunit B 2.